Consider the following 158-residue polypeptide: NAD(P)H-quinone oxidoreductase subunit J, chloroplastic (158 aa).

The protein belongs to the complex I 30 kDa subunit family. As to quaternary structure, NDH is composed of at least 16 different subunits, 5 of which are encoded in the nucleus.

The protein resides in the plastid. Its subcellular location is the chloroplast thylakoid membrane. It carries out the reaction a plastoquinone + NADH + (n+1) H(+)(in) = a plastoquinol + NAD(+) + n H(+)(out). It catalyses the reaction a plastoquinone + NADPH + (n+1) H(+)(in) = a plastoquinol + NADP(+) + n H(+)(out). Its function is as follows. NDH shuttles electrons from NAD(P)H:plastoquinone, via FMN and iron-sulfur (Fe-S) centers, to quinones in the photosynthetic chain and possibly in a chloroplast respiratory chain. The immediate electron acceptor for the enzyme in this species is believed to be plastoquinone. Couples the redox reaction to proton translocation, and thus conserves the redox energy in a proton gradient. The protein is NAD(P)H-quinone oxidoreductase subunit J, chloroplastic of Lupinus luteus (European yellow lupine).